Here is a 95-residue protein sequence, read N- to C-terminus: Aspartyl/glutamyl-tRNA(Asn/Gln) amidotransferase subunit C (95 aa).

It belongs to the GatC family. In terms of assembly, heterotrimer of A, B and C subunits.

It catalyses the reaction L-glutamyl-tRNA(Gln) + L-glutamine + ATP + H2O = L-glutaminyl-tRNA(Gln) + L-glutamate + ADP + phosphate + H(+). It carries out the reaction L-aspartyl-tRNA(Asn) + L-glutamine + ATP + H2O = L-asparaginyl-tRNA(Asn) + L-glutamate + ADP + phosphate + 2 H(+). In terms of biological role, allows the formation of correctly charged Asn-tRNA(Asn) or Gln-tRNA(Gln) through the transamidation of misacylated Asp-tRNA(Asn) or Glu-tRNA(Gln) in organisms which lack either or both of asparaginyl-tRNA or glutaminyl-tRNA synthetases. The reaction takes place in the presence of glutamine and ATP through an activated phospho-Asp-tRNA(Asn) or phospho-Glu-tRNA(Gln). The chain is Aspartyl/glutamyl-tRNA(Asn/Gln) amidotransferase subunit C from Hyphomonas neptunium (strain ATCC 15444).